The sequence spans 504 residues: Maturase K (504 aa).

It belongs to the intron maturase 2 family. MatK subfamily.

The protein localises to the plastid. Its subcellular location is the chloroplast. In terms of biological role, usually encoded in the trnK tRNA gene intron. Probably assists in splicing its own and other chloroplast group II introns. The polypeptide is Maturase K (Fagus crenata (Japanese beech)).